A 341-amino-acid polypeptide reads, in one-letter code: Phosphoribosylformylglycinamidine cyclo-ligase (341 aa).

The protein belongs to the AIR synthase family.

It is found in the cytoplasm. It catalyses the reaction 2-formamido-N(1)-(5-O-phospho-beta-D-ribosyl)acetamidine + ATP = 5-amino-1-(5-phospho-beta-D-ribosyl)imidazole + ADP + phosphate + H(+). Its pathway is purine metabolism; IMP biosynthesis via de novo pathway; 5-amino-1-(5-phospho-D-ribosyl)imidazole from N(2)-formyl-N(1)-(5-phospho-D-ribosyl)glycinamide: step 2/2. This chain is Phosphoribosylformylglycinamidine cyclo-ligase, found in Xanthomonas campestris pv. campestris (strain 8004).